We begin with the raw amino-acid sequence, 384 residues long: MRMGTPVPGTLLILLAASQGQTQTCPGSHSLRYFYTALSRPAISEPWYIAVGYLDDTQFVRFNSSGETATYKLSAPWVEQEGPEYWARETEIVTSNAQFFRENLQTMLDYYNLSQNGSHTIQVMYGCEVEFFGSLFRAYEQHGYDGPDYIALNEDLKTWTAADTAAEITRSKWEQAGYTELRRTYLEGPCKDSLLRYLENRKKTQECTDPPKTHVTHHPRPEGYVTLRCWALRFYPADITLTWQLNGEELIQDTELVETRPAGDGTFQKWAAVVVPLGKEQKYTCHVYHEGLPEPLTLRWEPPQTSMPNRTTVRALLGAMIILGFMSGSVMMWMRKNNGGNGDDNTAAYQNEREHLSLDPRAESEALGVEAGMKDLPSAPPLVS.

A signal peptide spans methionine 1–proline 26. The segment at glycine 27 to asparagine 116 is alpha-1. Over glycine 27 to arginine 314 the chain is Extracellular. N-linked (GlcNAc...) asparagine glycans are attached at residues asparagine 63, asparagine 112, and asparagine 116. Residues glycine 117–threonine 208 are alpha-2. 2 disulfides stabilise this stretch: cysteine 127-cysteine 190 and cysteine 229-cysteine 285. An alpha-3 region spans residues aspartate 209–tryptophan 300. Residues proline 211–arginine 299 form the Ig-like C1-type domain. The interval glutamate 301–arginine 314 is connecting peptide. Asparagine 309 carries an N-linked (GlcNAc...) asparagine glycan. Residues alanine 315–methionine 334 form a helical membrane-spanning segment. Topologically, residues arginine 335 to serine 384 are cytoplasmic. The segment covering glutamate 354–serine 364 has biased composition (basic and acidic residues). The segment at glutamate 354–serine 384 is disordered.

Belongs to the MHC class I family. Heterodimer of an alpha chain and a beta chain (beta-2-microglobulin). In terms of tissue distribution, TL antigens are only expressed on thymocytes, activated T-lymphocytes and on some thymic leukemias.

It is found in the membrane. Functionally, involved in the presentation of foreign antigens to the immune system. This Mus musculus (Mouse) protein is H-2 class I histocompatibility antigen, TLA(B) alpha chain (H2-T3).